The following is a 545-amino-acid chain: Monocarboxylate transporter 8 (545 aa).

A disordered region spans residues 1–98; the sequence is MALPSPASEE…VETRGTARGF (98 aa). N-acetylalanine is present on Ala2. At 2 to 102 the chain is on the cytoplasmic side; that stretch reads ALPSPASEEA…GTARGFQPPE (101 aa). Repeat copies occupy residues 29–50 and 51–72. Residues 29–72 form a 2 X 22 AA approximate tandem repeats region; the sequence is PVPEPEPEPEPEPEPEPEPVPVPPPEPQPEPEPQPLPDPAPLPV. Acidic residues predominate over residues 33 to 45; sequence PEPEPEPEPEPEP. Residues 46–70 are compositionally biased toward pro residues; the sequence is EPVPVPPPEPQPEPEPQPLPDPAPL. Residues 103 to 123 form a helical membrane-spanning segment; sequence GGFGWIVVFAATWCNGSIFGI. At 124 to 149 the chain is on the extracellular side; it reads HNSVGILYSMLLEEEKEKNRQVEFQA. The chain crosses the membrane as a helical span at residues 150–170; that stretch reads AWVGALAMGMIFFCSPIVSIF. Residues 171-181 are Cytoplasmic-facing; it reads TDRLGCRITAT. The chain crosses the membrane as a helical span at residues 182–202; the sequence is TGAAVAFIGLHTSSFTSSLSL. Over 203 to 204 the chain is Extracellular; that stretch reads RY. Residues 205–225 traverse the membrane as a helical segment; it reads FTYGILFGCGCSFAFQPSLVI. Residues 226–235 lie on the Cytoplasmic side of the membrane; that stretch reads LGHYFQRRLG. The chain crosses the membrane as a helical span at residues 236-256; sequence LANGVVSAGSSIFSMSFPFLI. Residues 257 to 264 are Extracellular-facing; it reads KMLGDRIK. A helical transmembrane segment spans residues 265–285; the sequence is LAQTFQVLSTFMFVLTLLSLT. At 286–328 the chain is on the cytoplasmic side; it reads YRPLLPSSQDTPSKRGAHTLRQRFLVQFRKYFNMRVFRQRTYR. A helical transmembrane segment spans residues 329–349; it reads IWAFGIAAAALGYFVPYVHLM. Residues 350–362 are Extracellular-facing; the sequence is KYVEDKFKEIKET. Residues 363–383 form a helical membrane-spanning segment; sequence WVLLVCIGATSGLGRLVSGHI. The Cytoplasmic portion of the chain corresponds to 384–392; that stretch reads SDSIPGLKK. Residues 393-413 traverse the membrane as a helical segment; the sequence is IYLQVLSFLLLGLMSMMIPLC. The Extracellular segment spans residues 414 to 415; the sequence is RD. Residues 416–436 traverse the membrane as a helical segment; that stretch reads FGGLIVVCLFLGLCDGFFITI. Over 437–453 the chain is Cytoplasmic; the sequence is MAPIAFELVGPMQASQA. Residues 454–474 traverse the membrane as a helical segment; the sequence is IGYLLGMMALPMIAGPPIAGL. Residues 475-483 lie on the Extracellular side of the membrane; sequence LRNCFGNYH. Residues 484 to 504 traverse the membrane as a helical segment; it reads VAFYFAGVPPIIGAVILFFVP. At 505–545 the chain is on the cytoplasmic side; it reads LMHQRMFKKEQRESSKDKMLSHDPDPNGELLPGSPTPEEPI. Residues 514–529 are compositionally biased toward basic and acidic residues; that stretch reads EQRESSKDKMLSHDPD. Residues 514-545 form a disordered region; the sequence is EQRESSKDKMLSHDPDPNGELLPGSPTPEEPI. Thr540 is modified (phosphothreonine).

This sequence belongs to the major facilitator superfamily. Monocarboxylate porter (TC 2.A.1.13) family. In terms of assembly, monomer. Homodimer. Homooligomer. In terms of tissue distribution, expressed at highest levels in liver, lower levels in brain, kidney and heart (at protein level). Expressed in microvessels of the blood-brain barrier (BBB) (at protein level).

It is found in the cell membrane. The protein localises to the apical cell membrane. It catalyses the reaction 3,3',5-triiodo-L-thyronine(out) = 3,3',5-triiodo-L-thyronine(in). The enzyme catalyses 3,3',5'-triiodo-L-thyronine(out) = 3,3',5'-triiodo-L-thyronine(in). The catalysed reaction is L-thyroxine(out) = L-thyroxine(in). It carries out the reaction 3,3'-diiodo-L-thyronine(out) = 3,3'-diiodo-L-thyronine(in). Its function is as follows. Specific thyroid hormone transmembrane transporter, that mediates both uptake and efflux of thyroid hormone across the cell membrane independently of pH or a Na(+) gradient. Major substrates are the iodothyronines T3 and T4 and to a lesser extent rT3 and 3,3-diiodothyronine (3,3'-T2). Acts as an important mediator of thyroid hormone transport, especially T3, through the blood-brain barrier. The sequence is that of Monocarboxylate transporter 8 (SLC16A2) from Rattus norvegicus (Rat).